The chain runs to 445 residues: FAS-associated factor 2 (445 aa).

A2 is subject to N-acetylalanine. A UBA domain is found at 12–48 (EQTEKLLQFQDLTGIESMDQCRHTLEQHNWNIEAAVQ). An N6-acetyllysine modification is found at K167. Positions 275-350 (SERLEREERN…EEKERKLECL (76 aa)) form a coiled coil. The interval 299 to 361 (ASLRADQEKE…PEPSPDDPES (63 aa)) is disordered. Over residues 303-348 (ADQEKERKKREERERKRRKEEEVQQQKLAEERRRRNLQEEKERKLE) the composition is skewed to basic and acidic residues. In terms of domain architecture, UBX spans 357–439 (DDPESVKIIF…GLSHTEVLFV (83 aa)).

As to quaternary structure, identified in a complex that contains SEL1L, OS9, FAF2/UBXD8, UBE2J1/UBC6E and AUP1. Interacts with YOD1. Interacts (via N-terminus) with UBQLN2 (via C-terminus). Interacts with PNPLA2 and UBAC2. Interacts with ZFAND2B; probably through VCP. Interacts with LMBR1L.

It localises to the cytoplasm. The protein resides in the lipid droplet. The protein localises to the endoplasmic reticulum. Plays an important role in endoplasmic reticulum-associated degradation (ERAD) that mediates ubiquitin-dependent degradation of misfolded endoplasmic reticulum proteins. By controlling the steady-state expression of the IGF1R receptor, indirectly regulates the insulin-like growth factor receptor signaling pathway. Involved in inhibition of lipid droplet degradation by binding to phospholipase PNPL2 and inhibiting its activity by promoting dissociation of PNPL2 from its endogenous activator, ABHD5 which inhibits the rate of triacylglycerol hydrolysis. Involved in stress granule disassembly: associates with ubiquitinated G3BP1 in response to heat shock, thereby promoting interaction between ubiquitinated G3BP1 and VCP, followed by G3BP1 extraction from stress granules and stress granule disassembly. The chain is FAS-associated factor 2 (FAF2) from Bos taurus (Bovine).